The chain runs to 193 residues: Large ribosomal subunit protein eL18 (193 aa).

Residues 158–193 (HFGAAGVPGSHAKPHVSSRGKERQRSSKRRHAFRHK) are disordered. The span at 183–193 (SSKRRHAFRHK) shows a compositional bias: basic residues.

This sequence belongs to the eukaryotic ribosomal protein eL18 family.

It localises to the cytoplasm. In Trypanosoma brucei brucei (strain 927/4 GUTat10.1), this protein is Large ribosomal subunit protein eL18 (RPL18-A).